A 365-amino-acid chain; its full sequence is MPAELTFVAPRRTPPPRHLADLDPQERRDAVAELGEKPFRARQLAQHYFGRLEADTARMTDLPAASRERLGEALLPQLLTPVKHVTCDNGMTRKTLWRAFDGVLVESVLMRYPDRVTLCVSSQAGCGMNCPFCATGQAGLTRNLSTAEIVDQVVSSARDLARGTVAGGPGRISNIVFMGMGEPLANYKRVLAAIRRITDPVPDGLGISQRGITVSTVGLVPAIEKLTAERMQVRLAVSLHAPDDELRDELVPVNHRWKVAEVLDAAWRYADTTGRRVSIEYALIRDINDQAWRADLLGRLVAGRLAHVNLIPLNPTPGSKWTASRPEVEREFVRRLRSHGVSVTVRDTRGREIDGACGQLAASGA.

The Proton acceptor role is filled by E106. The Radical SAM core domain occupies 112 to 352 (YPDRVTLCVS…VTVRDTRGRE (241 aa)). C119 and C357 form a disulfide bridge. Positions 126, 130, and 133 each coordinate [4Fe-4S] cluster. S-adenosyl-L-methionine is bound by residues 181-182 (GE), S215, 238-240 (SLH), and N314. C357 serves as the catalytic S-methylcysteine intermediate.

The protein belongs to the radical SAM superfamily. RlmN family. [4Fe-4S] cluster serves as cofactor.

The protein localises to the cytoplasm. It catalyses the reaction adenosine(2503) in 23S rRNA + 2 reduced [2Fe-2S]-[ferredoxin] + 2 S-adenosyl-L-methionine = 2-methyladenosine(2503) in 23S rRNA + 5'-deoxyadenosine + L-methionine + 2 oxidized [2Fe-2S]-[ferredoxin] + S-adenosyl-L-homocysteine. The enzyme catalyses adenosine(37) in tRNA + 2 reduced [2Fe-2S]-[ferredoxin] + 2 S-adenosyl-L-methionine = 2-methyladenosine(37) in tRNA + 5'-deoxyadenosine + L-methionine + 2 oxidized [2Fe-2S]-[ferredoxin] + S-adenosyl-L-homocysteine. In terms of biological role, specifically methylates position 2 of adenine 2503 in 23S rRNA and position 2 of adenine 37 in tRNAs. The sequence is that of Probable dual-specificity RNA methyltransferase RlmN from Thermobifida fusca (strain YX).